The following is a 129-amino-acid chain: Lysozyme C (129 aa).

The region spanning 1–129 is the C-type lysozyme domain; it reads KVYGRCELAA…VQAWIRGCRL (129 aa). 4 cysteine pairs are disulfide-bonded: Cys-6/Cys-127, Cys-30/Cys-115, Cys-64/Cys-80, and Cys-76/Cys-94. Catalysis depends on residues Glu-35 and Asp-52.

This sequence belongs to the glycosyl hydrolase 22 family. As to quaternary structure, monomer.

Its subcellular location is the secreted. It catalyses the reaction Hydrolysis of (1-&gt;4)-beta-linkages between N-acetylmuramic acid and N-acetyl-D-glucosamine residues in a peptidoglycan and between N-acetyl-D-glucosamine residues in chitodextrins.. Its function is as follows. Lysozymes have primarily a bacteriolytic function; those in tissues and body fluids are associated with the monocyte-macrophage system and enhance the activity of immunoagents. The chain is Lysozyme C (LYZ) from Tragopan satyra (Satyr tragopan).